Reading from the N-terminus, the 164-residue chain is Crossover junction endodeoxyribonuclease RuvC (164 aa).

Catalysis depends on residues aspartate 7, glutamate 67, and aspartate 140. Mg(2+)-binding residues include aspartate 7, glutamate 67, and aspartate 140.

It belongs to the RuvC family. In terms of assembly, homodimer which binds Holliday junction (HJ) DNA. The HJ becomes 2-fold symmetrical on binding to RuvC with unstacked arms; it has a different conformation from HJ DNA in complex with RuvA. In the full resolvosome a probable DNA-RuvA(4)-RuvB(12)-RuvC(2) complex forms which resolves the HJ. It depends on Mg(2+) as a cofactor.

Its subcellular location is the cytoplasm. It carries out the reaction Endonucleolytic cleavage at a junction such as a reciprocal single-stranded crossover between two homologous DNA duplexes (Holliday junction).. The RuvA-RuvB-RuvC complex processes Holliday junction (HJ) DNA during genetic recombination and DNA repair. Endonuclease that resolves HJ intermediates. Cleaves cruciform DNA by making single-stranded nicks across the HJ at symmetrical positions within the homologous arms, yielding a 5'-phosphate and a 3'-hydroxyl group; requires a central core of homology in the junction. The consensus cleavage sequence is 5'-(A/T)TT(C/G)-3'. Cleavage occurs on the 3'-side of the TT dinucleotide at the point of strand exchange. HJ branch migration catalyzed by RuvA-RuvB allows RuvC to scan DNA until it finds its consensus sequence, where it cleaves and resolves the cruciform DNA. The chain is Crossover junction endodeoxyribonuclease RuvC from Alkaliphilus oremlandii (strain OhILAs) (Clostridium oremlandii (strain OhILAs)).